Consider the following 453-residue polypeptide: Bifunctional protein GlmU (453 aa).

The tract at residues 1–225 (MNIVILAAGT…EWETLGVNSK (225 aa)) is pyrophosphorylase. UDP-N-acetyl-alpha-D-glucosamine-binding positions include 6-9 (LAAG), Lys20, Gln71, 76-77 (GT), 98-100 (YGD), Gly135, Glu150, Asn165, and Asn223. Asp100 is a binding site for Mg(2+). Residue Asn223 coordinates Mg(2+). The segment at 226–246 (AQLAELERIHQRNVADALLAD) is linker. An N-acetyltransferase region spans residues 247 to 453 (GVTLADPARI…GYVRPVKKKS (207 aa)). UDP-N-acetyl-alpha-D-glucosamine is bound by residues Arg329 and Lys347. The active-site Proton acceptor is His359. UDP-N-acetyl-alpha-D-glucosamine-binding residues include Tyr362 and Asn373. Acetyl-CoA is bound by residues Ala376, 382–383 (NY), Ser401, and Ala419.

The protein in the N-terminal section; belongs to the N-acetylglucosamine-1-phosphate uridyltransferase family. This sequence in the C-terminal section; belongs to the transferase hexapeptide repeat family. In terms of assembly, homotrimer. Mg(2+) serves as cofactor.

Its subcellular location is the cytoplasm. It catalyses the reaction alpha-D-glucosamine 1-phosphate + acetyl-CoA = N-acetyl-alpha-D-glucosamine 1-phosphate + CoA + H(+). It carries out the reaction N-acetyl-alpha-D-glucosamine 1-phosphate + UTP + H(+) = UDP-N-acetyl-alpha-D-glucosamine + diphosphate. Its pathway is nucleotide-sugar biosynthesis; UDP-N-acetyl-alpha-D-glucosamine biosynthesis; N-acetyl-alpha-D-glucosamine 1-phosphate from alpha-D-glucosamine 6-phosphate (route II): step 2/2. It functions in the pathway nucleotide-sugar biosynthesis; UDP-N-acetyl-alpha-D-glucosamine biosynthesis; UDP-N-acetyl-alpha-D-glucosamine from N-acetyl-alpha-D-glucosamine 1-phosphate: step 1/1. The protein operates within bacterial outer membrane biogenesis; LPS lipid A biosynthesis. Catalyzes the last two sequential reactions in the de novo biosynthetic pathway for UDP-N-acetylglucosamine (UDP-GlcNAc). The C-terminal domain catalyzes the transfer of acetyl group from acetyl coenzyme A to glucosamine-1-phosphate (GlcN-1-P) to produce N-acetylglucosamine-1-phosphate (GlcNAc-1-P), which is converted into UDP-GlcNAc by the transfer of uridine 5-monophosphate (from uridine 5-triphosphate), a reaction catalyzed by the N-terminal domain. This chain is Bifunctional protein GlmU, found in Burkholderia multivorans (strain ATCC 17616 / 249).